A 220-amino-acid polypeptide reads, in one-letter code: Ribose-5-phosphate isomerase A (220 aa).

Substrate is bound by residues 25–28 (TGST), 80–83 (DGAD), and 93–96 (KGGG). Glutamate 102 serves as the catalytic Proton acceptor. Lysine 120 is a substrate binding site.

This sequence belongs to the ribose 5-phosphate isomerase family. Homodimer.

The enzyme catalyses aldehydo-D-ribose 5-phosphate = D-ribulose 5-phosphate. Its pathway is carbohydrate degradation; pentose phosphate pathway; D-ribose 5-phosphate from D-ribulose 5-phosphate (non-oxidative stage): step 1/1. Its function is as follows. Catalyzes the reversible conversion of ribose-5-phosphate to ribulose 5-phosphate. The polypeptide is Ribose-5-phosphate isomerase A (Bacillus anthracis).